Reading from the N-terminus, the 324-residue chain is IDS-like terpene synthase 2 (324 aa).

Residues Asp77 and Asp81 each coordinate Mg(2+).

Belongs to the FPP/GGPP synthase family. Requires Mg(2+) as cofactor.

The enzyme catalyses (2E)-geranyl diphosphate = (E)-beta-ocimene + diphosphate. It carries out the reaction (2E,6E)-farnesyl diphosphate = (3E,6E)-alpha-farnesene + diphosphate. It catalyses the reaction (2E,6E,10E)-geranylgeranyl diphosphate = (E,E,E)-alpha-springene + diphosphate. In terms of biological role, terpene synthase that shows monoterpene synthase activity and produces (E)-beta-ocimene as a major product, using geranyl diphosphate (GPP) as substrate. Also shows sesquiterpene synthase activity as it is able to convert farnesyl diphosphate (FPP) into (E,E)-alpha-farnesene. Finally, TPS2 can convert geranylgeranyl diphosphate into (E,E,E)-alpha-springene. This is IDS-like terpene synthase 2 from Melampsora lini (Rust fungus).